The sequence spans 783 residues: Tricorn protease-interacting factor F2 (783 aa).

Substrate is bound by residues Glu107 and 236 to 240 (GAMEN). A Zn(2+)-binding site is contributed by His271. Glu272 serves as the catalytic Proton acceptor. Zn(2+) contacts are provided by His275 and Glu294.

Belongs to the peptidase M1 family. In terms of assembly, monomer. Part of the Tricorn proteolytic complex. Requires Zn(2+) as cofactor.

It localises to the cytoplasm. Functionally, proteases F1, F2 and F3 degrade oligopeptides produced by Tricorn (themselves probably produced by the proteasome), yielding free amino acids. The chain is Tricorn protease-interacting factor F2 (trf2) from Thermoplasma volcanium (strain ATCC 51530 / DSM 4299 / JCM 9571 / NBRC 15438 / GSS1).